The following is a 451-amino-acid chain: Tubulin gamma-1 chain (451 aa).

At S131 the chain carries Phosphoserine; by BRSK1. GTP is bound at residue 142-148 (AGGTGSG).

It belongs to the tubulin family. Component of the gamma-tubulin ring complex (gTuRC) consisting of TUBGCP2, TUBGCP3, TUBGCP4, TUBGCP5 and TUBGCP6 and gamma-tubulin TUBG1 or TUBG2. TUBGCP2, TUBGCP3, TUBGCP4, TUBGCP5 and TUBGCP6 assemble in a 5:5:2:1:1 stoichiometry; each is associated with a gamma-tubulin, thereby arranging 14 gamma-tubulins in a helical manner. Gamma-tubulin at the first position is blocked by TUBGCP3 at the last position, allowing 13 protafilaments to grow into a microtubule. The gTuRC (via TUBGCP3 and TUBGCP6) interacts with ACTB and MZT1; the interactions form a luminal bridge that stabilizes the initial structure during complex assembly. The gTuRC (via TUBGCP2) interacts with MZT2A/MZT2B and CDK5RAP2 (via CM1 motif); the interactions play a role in gTuRC activation. Interacts with alpha-beta tubulin heterodimers; the interaction allows microtubules to nucleate from the gTuRC. Interacts with B9D2. Interacts with CDK5RAP2; the interaction is leading to centrosomal localization of TUBG1 and CDK5RAP2. Interacts with CIMAP3. Interacts with SAS6 and NUP62 at the centrosome. Interacts with EML3 (phosphorylated at 'Thr-881') and HAUS8. Interacts with DNM2; this interaction may participate in centrosome cohesion. Interacts with CCDC66. In terms of processing, phosphorylation at Ser-131 by BRSK1 regulates centrosome duplication, possibly by mediating relocation of gamma-tubulin and its associated proteins from the cytoplasm to the centrosome.

The protein resides in the cytoplasm. It is found in the cytoskeleton. The protein localises to the microtubule organizing center. It localises to the centrosome. Its subcellular location is the spindle. Functionally, tubulin is the major constituent of microtubules, protein filaments consisting of alpha- and beta-tubulin heterodimers. Gamma-tubulin is a key component of the gamma-tubulin ring complex (gTuRC) which mediates microtubule nucleation. The gTuRC regulates the minus-end nucleation of alpha-beta tubulin heterodimers that grow into microtubule protafilaments, a critical step in centrosome duplication and spindle formation. This is Tubulin gamma-1 chain from Mus musculus (Mouse).